Reading from the N-terminus, the 283-residue chain is Protein FAM170A (283 aa).

Disordered regions lie at residues 1–54 (MKRR…RSQH) and 123–171 (GTPP…AKTP). The segment covering 127 to 138 (SDVSTRNLLSDS) has biased composition (polar residues). Basic and acidic residues predominate over residues 142–153 (GEEKEHEERTES). Phosphothreonine is present on Thr170. The segment at 181–205 (FRCMACCRVFTTMEALQEHVQFGIR) adopts a C2H2-type; degenerate zinc-finger fold. Positions 223 to 283 (NMESESTQDE…VFHSPKDRNS (61 aa)) are disordered. Acidic residues predominate over residues 228 to 246 (STQDEQEEENGNEKEEEEK). Residue Ser268 is modified to Phosphoserine.

Belongs to the FAM170 family.

Its subcellular location is the nucleus. Functionally, acts as a nuclear transcription factor that positively regulates the expression of heat shock genes. Binds to heat shock promoter elements (HSE). This chain is Protein FAM170A (FAM170A), found in Macaca fascicularis (Crab-eating macaque).